Here is a 77-residue protein sequence, read N- to C-terminus: Large ribosomal subunit protein bL31 (77 aa).

This sequence belongs to the bacterial ribosomal protein bL31 family. Type A subfamily. As to quaternary structure, part of the 50S ribosomal subunit.

Functionally, binds the 23S rRNA. This is Large ribosomal subunit protein bL31 from Microcystis aeruginosa (strain NIES-843 / IAM M-2473).